Consider the following 535-residue polypeptide: Probable acyl-activating enzyme 22 (535 aa).

Belongs to the ATP-dependent AMP-binding enzyme family.

In terms of biological role, may act as an acid--thiol ligase that activates carboxylic acids by forming acyl-CoAs. This is Probable acyl-activating enzyme 22 (AEE22) from Arabidopsis thaliana (Mouse-ear cress).